We begin with the raw amino-acid sequence, 503 residues long: Aspartyl/glutamyl-tRNA(Asn/Gln) amidotransferase subunit B (503 aa).

Belongs to the GatB/GatE family. GatB subfamily. As to quaternary structure, heterotrimer of A, B and C subunits.

It carries out the reaction L-glutamyl-tRNA(Gln) + L-glutamine + ATP + H2O = L-glutaminyl-tRNA(Gln) + L-glutamate + ADP + phosphate + H(+). The catalysed reaction is L-aspartyl-tRNA(Asn) + L-glutamine + ATP + H2O = L-asparaginyl-tRNA(Asn) + L-glutamate + ADP + phosphate + 2 H(+). Functionally, allows the formation of correctly charged Asn-tRNA(Asn) or Gln-tRNA(Gln) through the transamidation of misacylated Asp-tRNA(Asn) or Glu-tRNA(Gln) in organisms which lack either or both of asparaginyl-tRNA or glutaminyl-tRNA synthetases. The reaction takes place in the presence of glutamine and ATP through an activated phospho-Asp-tRNA(Asn) or phospho-Glu-tRNA(Gln). This Cereibacter sphaeroides (strain ATCC 17029 / ATH 2.4.9) (Rhodobacter sphaeroides) protein is Aspartyl/glutamyl-tRNA(Asn/Gln) amidotransferase subunit B.